A 231-amino-acid chain; its full sequence is MNNFFQGYNLLFQHSLFASYMDWFHAFNCSLLLGVLVFVTLLFGYLIFSTFYFKSKKIEYQFGELLCSIFPTIILLMQMVPSLSLLYYYGLMNLDSNLTVKVTGHQWYWSYEYSDIPGLEFDSYMKSLDQLNLGEPRLLEVDNRCVIPCDTNIRFCITSADVIHAWALNSLSVKLDAMSGILSTFSYSFPMVGVFYGQCSEICGANHSFMPIALEVTLLDNFKSWCFGTME.

Over 1–30 (MNNFFQGYNLLFQHSLFASYMDWFHAFNCS) the chain is Mitochondrial intermembrane. A helical transmembrane segment spans residues 31-51 (LLLGVLVFVTLLFGYLIFSTF). The Mitochondrial matrix portion of the chain corresponds to 52-64 (YFKSKKIEYQFGE). Residues 65 to 85 (LLCSIFPTIILLMQMVPSLSL) form a helical membrane-spanning segment. The Mitochondrial intermembrane segment spans residues 86 to 231 (LYYYGLMNLD…FKSWCFGTME (146 aa)). Cu cation contacts are provided by His-164, Cys-199, Glu-201, Cys-203, His-207, and Met-210. Mg(2+) is bound at residue Glu-201.

It belongs to the cytochrome c oxidase subunit 2 family. Component of the cytochrome c oxidase (complex IV, CIV), a multisubunit enzyme composed of a catalytic core of 3 subunits and several supernumerary subunits. The complex exists as a monomer or a dimer and forms supercomplexes (SCs) in the inner mitochondrial membrane with ubiquinol-cytochrome c oxidoreductase (cytochrome b-c1 complex, complex III, CIII). Cu cation serves as cofactor.

It is found in the mitochondrion inner membrane. It catalyses the reaction 4 Fe(II)-[cytochrome c] + O2 + 8 H(+)(in) = 4 Fe(III)-[cytochrome c] + 2 H2O + 4 H(+)(out). In terms of biological role, component of the cytochrome c oxidase, the last enzyme in the mitochondrial electron transport chain which drives oxidative phosphorylation. The respiratory chain contains 3 multisubunit complexes succinate dehydrogenase (complex II, CII), ubiquinol-cytochrome c oxidoreductase (cytochrome b-c1 complex, complex III, CIII) and cytochrome c oxidase (complex IV, CIV), that cooperate to transfer electrons derived from NADH and succinate to molecular oxygen, creating an electrochemical gradient over the inner membrane that drives transmembrane transport and the ATP synthase. Cytochrome c oxidase is the component of the respiratory chain that catalyzes the reduction of oxygen to water. Electrons originating from reduced cytochrome c in the intermembrane space (IMS) are transferred via the dinuclear copper A center (CU(A)) of subunit 2 and heme A of subunit 1 to the active site in subunit 1, a binuclear center (BNC) formed by heme A3 and copper B (CU(B)). The BNC reduces molecular oxygen to 2 water molecules using 4 electrons from cytochrome c in the IMS and 4 protons from the mitochondrial matrix. This Caenorhabditis briggsae protein is Cytochrome c oxidase subunit 2 (cox-2).